The following is a 317-amino-acid chain: MSTQYLNSNLKVFSLNSNKELAEQIAKHIGVGLGKCSVDRFSDGEVQINIEESIRGCDVFIIQSTSFPVNEHIMELLIMIDALKRASAKTINIVIPYYGYARQDRKARSREPITSKLVANLLETAGATRVITLDLHAPQIQGFFDIPIDHLMGVPILSDYFETKGLKDIVIVSPDHGGVTRARKMADRLKAPIAIIDKRRPRPNVSEVMNIIGNIEGKTAILIDDIIDTAGTITLAANALVENGASEVYACCTHPVLSGPAIERIQNSNIKELVVTNSIVLPEEKKIDKVHELSVAPLIGEAIIRVYEEESVSVLFN.

Residues 43–45 and 102–103 each bind ATP; these read DGE and RQ. Residues His136 and Asp175 each contribute to the Mg(2+) site. Lys198 is a catalytic residue. D-ribose 5-phosphate is bound by residues Arg200, Asp224, and 228-232; that span reads DTAGT.

This sequence belongs to the ribose-phosphate pyrophosphokinase family. Class I subfamily. In terms of assembly, homohexamer. Mg(2+) is required as a cofactor.

It localises to the cytoplasm. It catalyses the reaction D-ribose 5-phosphate + ATP = 5-phospho-alpha-D-ribose 1-diphosphate + AMP + H(+). Its pathway is metabolic intermediate biosynthesis; 5-phospho-alpha-D-ribose 1-diphosphate biosynthesis; 5-phospho-alpha-D-ribose 1-diphosphate from D-ribose 5-phosphate (route I): step 1/1. Functionally, involved in the biosynthesis of the central metabolite phospho-alpha-D-ribosyl-1-pyrophosphate (PRPP) via the transfer of pyrophosphoryl group from ATP to 1-hydroxyl of ribose-5-phosphate (Rib-5-P). This Bacillus anthracis protein is Ribose-phosphate pyrophosphokinase.